Reading from the N-terminus, the 186-residue chain is RNA-free ribonuclease P (186 aa).

Belongs to the HARP family.

It catalyses the reaction Endonucleolytic cleavage of RNA, removing 5'-extranucleotides from tRNA precursor.. Its function is as follows. RNA-free RNase P that catalyzes the removal of the 5'-leader sequence from pre-tRNA to produce the mature 5'-terminus. The protein is RNA-free ribonuclease P of Hydrogenobaculum sp. (strain Y04AAS1).